Here is a 133-residue protein sequence, read N- to C-terminus: Large ribosomal subunit protein eL32y (133 aa).

It belongs to the eukaryotic ribosomal protein eL32 family.

In Arabidopsis thaliana (Mouse-ear cress), this protein is Large ribosomal subunit protein eL32y (RPL32B).